The following is a 97-amino-acid chain: Cobalt transport protein CbiN (97 aa).

The next 2 helical transmembrane spans lie at 6–26 and 68–88; these read VLMI…YSGL and SLLF…FFGY.

This sequence belongs to the CbiN family. In terms of assembly, forms an energy-coupling factor (ECF) transporter complex composed of an ATP-binding protein (A component, CbiO), a transmembrane protein (T component, CbiQ) and 2 possible substrate-capture proteins (S components, CbiM and CbiN) of unknown stoichimetry.

Its subcellular location is the cell membrane. Its pathway is cofactor biosynthesis; adenosylcobalamin biosynthesis. Part of the energy-coupling factor (ECF) transporter complex CbiMNOQ involved in cobalt import. This is Cobalt transport protein CbiN from Methanococcus maripaludis (strain C7 / ATCC BAA-1331).